The primary structure comprises 350 residues: Fe(2+) transport protein 2 (350 aa).

The N-terminal stretch at 1–21 (MATTKLVYILLILFTFTVSPA) is a signal peptide. Residues 22-47 (ISTAPEHCDSGFDNPCINKAKALPLK) lie on the Extracellular side of the membrane. The chain crosses the membrane as a helical span at residues 48–68 (IVAIVAILTTSLIGVTSPLFS). Over 69–80 (RYISFLRPDGNG) the chain is Cytoplasmic. The helical transmembrane segment at 81–101 (FMIVKCFSSGIILGTGFMHVL) threads the bilayer. Residues 102–120 (PDSFEMLSSKCLSDNPWHK) lie on the Extracellular side of the membrane. A helical membrane pass occupies residues 121–141 (FPFAGFVAMMSGLVTLAIDSI). Topologically, residues 142–195 (TTSLYTGKNSVGPVPDEEYGIDQEKAIHMVGHNHSHGHGVVLATKDDGQLLRYQ) are cytoplasmic. Residues 196–216 (VIAMVLEVGILFHSVVIGLSL) form a helical membrane-spanning segment. At 217–227 (GATNDSCTIKG) the chain is on the extracellular side. A helical transmembrane segment spans residues 228–248 (LIIALCFHHLFEGIGLGGCIL). Residues 249–257 (QADFTNVKK) are Cytoplasmic-facing. Residues 258–278 (FLMAFFFTGTTPCGIFLGIAL) traverse the membrane as a helical segment. The Extracellular segment spans residues 279–289 (SSIYRDNSPTA). The chain crosses the membrane as a helical span at residues 290–310 (LITIGLLNACSAGMLIYMALV). The Cytoplasmic segment spans residues 311–329 (DLLATEFMGSMLQGSIKLQ). A helical membrane pass occupies residues 330 to 350 (IKCFTAALLGCAVMSVVAVWA).

Belongs to the ZIP transporter (TC 2.A.5) family. Expressed in the external cell layers of the root subapical zone.

Its subcellular location is the cell membrane. Functionally, high-affinity iron transporter that mediates under iron-deficiency the iron uptake from the rhizosphere across the plasma membrane in the root epidermal layer. Could also be capable of transporting zinc ions. The polypeptide is Fe(2+) transport protein 2 (IRT2) (Arabidopsis thaliana (Mouse-ear cress)).